A 585-amino-acid chain; its full sequence is tRNA 5-methylaminomethyl-2-thiouridine biosynthesis bifunctional protein MnmC (585 aa).

Residues 1–236 (MTPDGLYCDP…KRERLEAVWP (236 aa)) form a tRNA (mnm(5)s(2)U34)-methyltransferase region. Residues 254–585 (LGAGIAGASL…SRRAGQGAAG (332 aa)) form an FAD-dependent cmnm(5)s(2)U34 oxidoreductase region. Positions 564–585 (EAMAPGRFAERRSRRAGQGAAG) are disordered.

This sequence in the N-terminal section; belongs to the methyltransferase superfamily. tRNA (mnm(5)s(2)U34)-methyltransferase family. The protein in the C-terminal section; belongs to the DAO family. The cofactor is FAD.

The protein resides in the cytoplasm. The enzyme catalyses 5-aminomethyl-2-thiouridine(34) in tRNA + S-adenosyl-L-methionine = 5-methylaminomethyl-2-thiouridine(34) in tRNA + S-adenosyl-L-homocysteine + H(+). Catalyzes the last two steps in the biosynthesis of 5-methylaminomethyl-2-thiouridine (mnm(5)s(2)U) at the wobble position (U34) in tRNA. Catalyzes the FAD-dependent demodification of cmnm(5)s(2)U34 to nm(5)s(2)U34, followed by the transfer of a methyl group from S-adenosyl-L-methionine to nm(5)s(2)U34, to form mnm(5)s(2)U34. This is tRNA 5-methylaminomethyl-2-thiouridine biosynthesis bifunctional protein MnmC from Maricaulis maris (strain MCS10) (Caulobacter maris).